We begin with the raw amino-acid sequence, 276 residues long: MDLWTAAQALILGIVEGLTEFLPISSTGHQIIVADLLDFGGERAMAFNIIIQLGAILAVVWEFRRKILDVVIGLPTQPKAQRFTINLLIAFLPAVVLGVIFADLIHAYLFNPITVATALVVGGLIMLWAERRQHQVHAETVDDITWKDALKVGCAQCLAMIPGTSRSGSTIIGGLLFGLSRKTATEFSFFLAMPTMVGAAVYSGYKYRHLFQPDDFPVFAIGFVTAFVFAMIAVKGLLKFIASHSYAAFAWYRIAFGLLILATWQFGWVDWTAAKP.

6 helical membrane passes run 43–63, 85–105, 109–129, 184–204, 218–238, and 254–274; these read RAMA…VWEF, INLL…ADLI, LFNP…MLWA, ATEF…VYSG, VFAI…KGLL, and IAFG…WTAA.

Belongs to the UppP family.

The protein localises to the cell inner membrane. It catalyses the reaction di-trans,octa-cis-undecaprenyl diphosphate + H2O = di-trans,octa-cis-undecaprenyl phosphate + phosphate + H(+). In terms of biological role, catalyzes the dephosphorylation of undecaprenyl diphosphate (UPP). Confers resistance to bacitracin. This Pseudomonas fluorescens (strain ATCC BAA-477 / NRRL B-23932 / Pf-5) protein is Undecaprenyl-diphosphatase.